The following is a 179-amino-acid chain: CMT1A duplicated region transcript 4 protein homolog (179 aa).

The segment covering 1 to 15 (MISRPESSLSGLESS) has biased composition (low complexity). The segment at 1–20 (MISRPESSLSGLESSQEVQK) is disordered.

The polypeptide is CMT1A duplicated region transcript 4 protein homolog (Cdrt4) (Mus musculus (Mouse)).